Consider the following 179-residue polypeptide: Large ribosomal subunit protein uL5 (179 aa).

The protein belongs to the universal ribosomal protein uL5 family. As to quaternary structure, part of the 50S ribosomal subunit; part of the 5S rRNA/L5/L18/L25 subcomplex. Contacts the 5S rRNA and the P site tRNA. Forms a bridge to the 30S subunit in the 70S ribosome.

Functionally, this is one of the proteins that bind and probably mediate the attachment of the 5S RNA into the large ribosomal subunit, where it forms part of the central protuberance. In the 70S ribosome it contacts protein S13 of the 30S subunit (bridge B1b), connecting the 2 subunits; this bridge is implicated in subunit movement. Contacts the P site tRNA; the 5S rRNA and some of its associated proteins might help stabilize positioning of ribosome-bound tRNAs. This is Large ribosomal subunit protein uL5 from Deinococcus geothermalis (strain DSM 11300 / CIP 105573 / AG-3a).